A 167-amino-acid chain; its full sequence is Fimbrial adapter PapF (167 aa).

A signal peptide spans 1–18 (MIRLSLFISLLLTSVAVL).

The protein resides in the secreted. It localises to the fimbrium. Functionally, adapter that links the PapG adhesin to the distal end of the tip fibrillum. PapF is required for the correct presentation of the adhesin at the distal end of the tip fibrillum. Pili are polar filaments radiating from the surface of the bacterium to a length of 0.5-1.5 micrometers and numbering 100-300 per cell, and enable bacteria to colonize the epithelium of specific host organs. This chain is Fimbrial adapter PapF (papF), found in Escherichia coli.